The following is a 670-amino-acid chain: MSQIPSPNDPPPAGAVPTSGAPAGPSATPAPSPTAGFSLPEHRPAPTGKALAALAVGALGVVYGDIGTSPLYSLKECFGGPHGVHPTDANVLGVLSLVFWAMTFVVTFKYMSFVMRADNRGEGGILALMALVGKTETTRLGRRVLLMLGLFGAALLYGDGIITPAISVLGAVEGVAVAAPAMERVVVPATVVILVFLFLFQKQGTAKVGAVFGPIMLVWFATIAVLGVRGILHDPSILRALLPTHALSFFARNGWHGFLVLGGVVLVITGGEALYADMGHFGKRPIRVAWLGLAMPALLLNYLGQGALLLHDPGAARNPFYLLAPEWALYPTIAIATAAAIVASQALISGAYSLTQQAIQLGYSPRVTIRHTSQREIGQIYLPEVNWMLGTACVALVLGFQTSSRLASAYGIAVTGTMIVTTLLFHRVMRDRWGWARWKAWPLTVLFLTVDASFFLANVVKFRDGGWFPIAAAALVFTLMSTWKRGRDALALMLKDAGLPLDLFMADVARRKVQRVAGTAVFMTSNPGGVPPVLLHHLKHNKVLHERVILVSILAHEIPFVAEAERVNARELGSGFFQVIAHYGFMETPDVPALLDSLPRRALAGPRLTIVPMETTYFLGRETLLANGPSTIPTWRKRLFIVMARNAQTASAFFGLPPNRVVEMGAQIQL.

Residues 1-42 form a disordered region; it reads MSQIPSPNDPPPAGAVPTSGAPAGPSATPAPSPTAGFSLPEH. A compositionally biased stretch (low complexity) spans 15–35; it reads AVPTSGAPAGPSATPAPSPTA. The next 12 membrane-spanning stretches (helical) occupy residues 51–71, 91–111, 144–164, 180–200, 208–228, 254–274, 290–310, 322–342, 380–400, 406–426, 440–460, and 464–484; these read LAALAVGALGVVYGDIGTSPL, VLGVLSLVFWAMTFVVTFKYM, VLLMLGLFGAALLYGDGIITP, PAMERVVVPATVVILVFLFLF, VGAVFGPIMLVWFATIAVLGV, GWHGFLVLGGVVLVITGGEAL, WLGLAMPALLLNYLGQGALLL, LLAPEWALYPTIAIATAAAIV, IYLPEVNWMLGTACVALVLGF, LASAYGIAVTGTMIVTTLLFH, AWPLTVLFLTVDASFFLANVV, and DGGWFPIAAAALVFTLMSTWK.

The protein belongs to the HAK/KUP transporter (TC 2.A.72) family.

It localises to the cell inner membrane. It catalyses the reaction K(+)(in) + H(+)(in) = K(+)(out) + H(+)(out). Transport of potassium into the cell. Likely operates as a K(+):H(+) symporter. The protein is Probable potassium transport system protein Kup of Anaeromyxobacter dehalogenans (strain 2CP-C).